The chain runs to 219 residues: 7-cyano-7-deazaguanine synthase (219 aa).

Phe11 to Leu21 serves as a coordination point for ATP. Zn(2+) contacts are provided by Cys188, Cys196, Cys199, and Cys202.

Belongs to the QueC family. The cofactor is Zn(2+).

It carries out the reaction 7-carboxy-7-deazaguanine + NH4(+) + ATP = 7-cyano-7-deazaguanine + ADP + phosphate + H2O + H(+). It participates in purine metabolism; 7-cyano-7-deazaguanine biosynthesis. In terms of biological role, catalyzes the ATP-dependent conversion of 7-carboxy-7-deazaguanine (CDG) to 7-cyano-7-deazaguanine (preQ(0)). The polypeptide is 7-cyano-7-deazaguanine synthase (Glaesserella parasuis serovar 5 (strain SH0165) (Haemophilus parasuis)).